Consider the following 213-residue polypeptide: Glutathione S-transferase DHAR2 (213 aa).

Cys-6 carries the post-translational modification S-glutathionyl cysteine. Glutathione-binding residues include Lys-8 and Asp-19. L-ascorbate contacts are provided by Lys-8 and Asp-19. The GST N-terminal domain maps to 10–83; the sequence is AVGAPDVLGD…DVIVGLLEEK (74 aa). S-glutathionyl cysteine is present on Cys-20. Cys-20 serves as the catalytic Nucleophile. The Glutathione-binding motif lies at 20-25; sequence CPFSQR. Glutathione-binding residues include Lys-47, Val-60, Ser-73, His-160, and Trp-207. One can recognise a GST C-terminal domain in the interval 84 to 213; that stretch reads YPEPSLKTPP…VAGWESKVNA (130 aa). An L-ascorbate-binding site is contributed by Lys-210.

It belongs to the GST superfamily. DHAR family. As to quaternary structure, monomer. Post-translationally, spontaneous S-glutathionylation in the presence of oxidized glutathione (GSSG).

It localises to the cytoplasm. It is found in the cytosol. The catalysed reaction is RX + glutathione = an S-substituted glutathione + a halide anion + H(+). It carries out the reaction L-dehydroascorbate + 2 glutathione = glutathione disulfide + L-ascorbate. Displays a dual function. As a soluble protein, exhibits glutathione-dependent thiol transferase and dehydroascorbate (DHA) reductase activities. Exhibits glutathione-dependent thiol transferase and dehydroascorbate (DHA) reductase activities. Key component of the ascorbate recycling system. Involved in the redox homeostasis, especially in scavenging of ROS under oxidative stresses. Plays a role in ozone tolerance. This chain is Glutathione S-transferase DHAR2 (DHAR2), found in Arabidopsis thaliana (Mouse-ear cress).